The primary structure comprises 160 residues: Protein-export protein SecB (160 aa).

This sequence belongs to the SecB family. In terms of assembly, homotetramer, a dimer of dimers. One homotetramer interacts with 1 SecA dimer.

It is found in the cytoplasm. Functionally, one of the proteins required for the normal export of preproteins out of the cell cytoplasm. It is a molecular chaperone that binds to a subset of precursor proteins, maintaining them in a translocation-competent state. It also specifically binds to its receptor SecA. The protein is Protein-export protein SecB of Rhizobium johnstonii (strain DSM 114642 / LMG 32736 / 3841) (Rhizobium leguminosarum bv. viciae).